The following is a 345-amino-acid chain: S-adenosylmethionine:tRNA ribosyltransferase-isomerase (345 aa).

Belongs to the QueA family. Monomer.

Its subcellular location is the cytoplasm. The catalysed reaction is 7-aminomethyl-7-carbaguanosine(34) in tRNA + S-adenosyl-L-methionine = epoxyqueuosine(34) in tRNA + adenine + L-methionine + 2 H(+). Its pathway is tRNA modification; tRNA-queuosine biosynthesis. In terms of biological role, transfers and isomerizes the ribose moiety from AdoMet to the 7-aminomethyl group of 7-deazaguanine (preQ1-tRNA) to give epoxyqueuosine (oQ-tRNA). The polypeptide is S-adenosylmethionine:tRNA ribosyltransferase-isomerase (Shewanella sp. (strain W3-18-1)).